We begin with the raw amino-acid sequence, 341 residues long: Formimidoylglutamase (341 aa).

Mn(2+) is bound by residues His133, Asp162, His164, Asp166, Cys253, and Asp255.

Belongs to the arginase family. The cofactor is Mn(2+).

It catalyses the reaction N-formimidoyl-L-glutamate + H2O = formamide + L-glutamate. It functions in the pathway amino-acid degradation; L-histidine degradation into L-glutamate; L-glutamate from N-formimidoyl-L-glutamate (hydrolase route): step 1/1. Functionally, catalyzes the conversion of N-formimidoyl-L-glutamate to L-glutamate and formamide. The protein is Formimidoylglutamase of Aromatoleum aromaticum (strain DSM 19018 / LMG 30748 / EbN1) (Azoarcus sp. (strain EbN1)).